A 77-amino-acid chain; its full sequence is MGSFSIWHWLIVLVIVMLVFGTKKLRNIGQDLGGAVKGFKDGMKDADAAADASTQQKISGGQTLEGEAREKVEKTHS.

The chain crosses the membrane as a helical span at residues 1–21 (MGSFSIWHWLIVLVIVMLVFG). A disordered region spans residues 50 to 77 (ADASTQQKISGGQTLEGEAREKVEKTHS). A compositionally biased stretch (polar residues) spans 53 to 62 (STQQKISGGQ). Residues 66–77 (GEAREKVEKTHS) show a composition bias toward basic and acidic residues.

Belongs to the TatA/E family. In terms of assembly, the Tat system comprises two distinct complexes: a TatABC complex, containing multiple copies of TatA, TatB and TatC subunits, and a separate TatA complex, containing only TatA subunits. Substrates initially bind to the TatABC complex, which probably triggers association of the separate TatA complex to form the active translocon.

Its subcellular location is the cell inner membrane. Part of the twin-arginine translocation (Tat) system that transports large folded proteins containing a characteristic twin-arginine motif in their signal peptide across membranes. TatA could form the protein-conducting channel of the Tat system. The polypeptide is Sec-independent protein translocase protein TatA (Azoarcus sp. (strain BH72)).